Reading from the N-terminus, the 62-residue chain is Frontoxin III (62 aa).

4 disulfide bridges follow: Cys3–Cys24, Cys17–Cys41, Cys43–Cys54, and Cys55–Cys60.

As to expression, expressed by the venom gland.

The protein localises to the secreted. Functionally, binds to muscle nicotinic acetylcholine receptor (nAChR) and inhibit acetylcholine from binding to the receptor, thereby impairing neuromuscular transmission. The chain is Frontoxin III from Micrurus frontalis (Coral snake).